Reading from the N-terminus, the 575-residue chain is Homocysteine/cysteine synthase (575 aa).

Lys376 is modified (N6-(pyridoxal phosphate)lysine).

It belongs to the trans-sulfuration enzymes family. MET7 subfamily. It depends on pyridoxal 5'-phosphate as a cofactor.

Its subcellular location is the cytoplasm. It carries out the reaction O-acetyl-L-homoserine + methanethiol = L-methionine + acetate + H(+). It catalyses the reaction O-acetyl-L-homoserine + hydrogen sulfide = L-homocysteine + acetate. The catalysed reaction is O-acetyl-L-serine + hydrogen sulfide = L-cysteine + acetate. It functions in the pathway amino-acid biosynthesis; L-methionine biosynthesis via de novo pathway; L-homocysteine from O-acetyl-L-homoserine. Its function is as follows. Plays a role in inorganic sulfur assimilation during sulfur-limited conditions; catalyzes the conversion of O-acetyl-L-homoserine (OAH) into homocysteine in the methionine biosynthesis pathway. Also catalyzes the conversion of O-acetylserine (OAS) into cysteine, the last step in the cysteine biosynthesis pathway. However, it seems that in S.cerevisiae cysteine biosynthesis occurs exclusively through the cystathionine pathway and not via direct incorporation of sulfur into OAS. It therefore has no metabolic role in cysteine biosynthesis and may only have a regulatory role controlling OAS levels. The protein is Homocysteine/cysteine synthase of Saccharomyces cerevisiae (strain ATCC 204508 / S288c) (Baker's yeast).